Reading from the N-terminus, the 342-residue chain is Cell division protein ZipA (342 aa).

Topologically, residues M1–L6 are periplasmic. Residues V7–I27 form a helical membrane-spanning segment. Residues R28–A342 lie on the Cytoplasmic side of the membrane. The tract at residues K33–V57 is disordered. The segment covering Q47 to V57 has biased composition (basic and acidic residues).

This sequence belongs to the ZipA family. In terms of assembly, interacts with FtsZ via their C-terminal domains.

It is found in the cell inner membrane. Its function is as follows. Essential cell division protein that stabilizes the FtsZ protofilaments by cross-linking them and that serves as a cytoplasmic membrane anchor for the Z ring. Also required for the recruitment to the septal ring of downstream cell division proteins. This chain is Cell division protein ZipA, found in Shewanella sp. (strain W3-18-1).